Reading from the N-terminus, the 136-residue chain is Small ribosomal subunit protein bS6 (136 aa).

Residues 117-130 show a composition bias toward basic and acidic residues; sequence EERSRSSRRQREDV. The tract at residues 117–136 is disordered; that stretch reads EERSRSSRRQREDVIEGVEL.

It belongs to the bacterial ribosomal protein bS6 family.

Binds together with bS18 to 16S ribosomal RNA. In Bartonella quintana (strain Toulouse) (Rochalimaea quintana), this protein is Small ribosomal subunit protein bS6.